A 117-amino-acid chain; its full sequence is Appetite-regulating hormone (117 aa).

The N-terminal stretch at 1-23 (MPSLGTMCSLLLFSVLWVDLAMA) is a signal peptide. The O-decanoyl serine; alternate moiety is linked to residue Ser-26. A lipid anchor (O-hexanoyl serine; alternate) is attached at Ser-26. Ser-26 is lipidated: O-octanoyl serine; alternate. The segment at 30–68 (PEHQKLQQRKESKKPPAKLQPRALEGSLGPEDTSQVEEA) is disordered. The span at 31-43 (EHQKLQQRKESKK) shows a compositional bias: basic and acidic residues. The propeptide at 52–75 (ALEGSLGPEDTSQVEEAEDELEIR) is removed in mature form. Leu-98 carries the post-translational modification Leucine amide. A propeptide spans 99-117 (GKFLQEVLWEDTNEALADE) (removed in mature form).

Belongs to the motilin family. In terms of processing, O-octanoylated by GOAT/MBOAT4. O-octanoylation is essential for ghrelin activity. Post-translationally, amidation of Leu-98 is essential for obestatin activity.

The protein localises to the secreted. In terms of biological role, ghrelin is the ligand for growth hormone secretagogue receptor type 1 (GHSR). Induces the release of growth hormone from the pituitary. Has an appetite-stimulating effect, induces adiposity and stimulates gastric acid secretion. Involved in growth regulation. Obestatin may be the ligand for GPR39. May have an appetite-reducing effect resulting in decreased food intake. May reduce gastric emptying activity and jejunal motility. The sequence is that of Appetite-regulating hormone (GHRL) from Canis lupus familiaris (Dog).